The sequence spans 492 residues: Bifunctional purine biosynthesis protein PurH (492 aa).

The MGS-like domain maps to 1–144 (MRKALLSVSD…KNFRHVITVV (144 aa)).

It belongs to the PurH family.

It catalyses the reaction (6R)-10-formyltetrahydrofolate + 5-amino-1-(5-phospho-beta-D-ribosyl)imidazole-4-carboxamide = 5-formamido-1-(5-phospho-D-ribosyl)imidazole-4-carboxamide + (6S)-5,6,7,8-tetrahydrofolate. The enzyme catalyses IMP + H2O = 5-formamido-1-(5-phospho-D-ribosyl)imidazole-4-carboxamide. The protein operates within purine metabolism; IMP biosynthesis via de novo pathway; 5-formamido-1-(5-phospho-D-ribosyl)imidazole-4-carboxamide from 5-amino-1-(5-phospho-D-ribosyl)imidazole-4-carboxamide (10-formyl THF route): step 1/1. It participates in purine metabolism; IMP biosynthesis via de novo pathway; IMP from 5-formamido-1-(5-phospho-D-ribosyl)imidazole-4-carboxamide: step 1/1. This is Bifunctional purine biosynthesis protein PurH from Macrococcus caseolyticus (strain JCSC5402) (Macrococcoides caseolyticum).